A 258-amino-acid chain; its full sequence is Protein CHAPERONE-LIKE PROTEIN OF POR1, chloroplastic (258 aa).

A chloroplast-targeting transit peptide spans 1-48 (MSSSLLLSGSTVSSSFIAPSKPSLVRNSSKTSLLPFRNVSRSFKTVKC). T49 is subject to N-acetylthreonine. A J-like domain required for holdase chaperone activity region spans residues 67 to 122 (WDPYKRLGVSPYASEEEIWASRNFLLQQYAGHERSEESIEGAFEKLLMSSFIRRKK). 3 helical membrane passes run 162 to 182 (FLFA…GPAF), 207 to 227 (LIGI…IPMI), and 237 to 257 (TLEL…CTFL).

It belongs to the chaperone-like protein of POR1 protein family. In terms of assembly, interacts with PORB in chloroplast. Interacts with PORA during plastid import. In terms of tissue distribution, expressed ubiquitously with higher levels in young leaves, flowers, and the root elongation zone.

The protein resides in the mitochondrion membrane. It is found in the plastid. Its subcellular location is the chloroplast envelope. It localises to the chloroplast thylakoid membrane. In terms of biological role, essential protein required during embryogenesis. Exhibits holdase chaperone activity involved in the stabilization of NADPH:protochlorophyllide oxidoreductase (POR) proteins against photooxidative stress during POR proteins import into chloroplasts. Required for chloroplast biogenesis and development. When expressed in yeast, triggers mitochondria-mediated cell death associated with the loss of mitochondrial membrane potential. This is Protein CHAPERONE-LIKE PROTEIN OF POR1, chloroplastic from Arabidopsis thaliana (Mouse-ear cress).